Here is a 233-residue protein sequence, read N- to C-terminus: LexA repressor (233 aa).

Positions 26–46 (FDEMKDALDLRSKSGIHRLIT) form a DNA-binding region, H-T-H motif. Residues serine 154 and lysine 192 each act as for autocatalytic cleavage activity in the active site.

It belongs to the peptidase S24 family. Homodimer.

It catalyses the reaction Hydrolysis of Ala-|-Gly bond in repressor LexA.. Its function is as follows. Represses a number of genes involved in the response to DNA damage (SOS response), including recA and lexA. In the presence of single-stranded DNA, RecA interacts with LexA causing an autocatalytic cleavage which disrupts the DNA-binding part of LexA, leading to derepression of the SOS regulon and eventually DNA repair. This is LexA repressor from Nitrobacter hamburgensis (strain DSM 10229 / NCIMB 13809 / X14).